We begin with the raw amino-acid sequence, 364 residues long: G-protein coupled receptor 4 (364 aa).

Residues 1–8 lie on the Extracellular side of the membrane; the sequence is MCNVSQDS. N3 carries an N-linked (GlcNAc...) asparagine glycan. Residues 9–45 traverse the membrane as a helical segment; it reads CNIDSRLDSLFPPTLYIFVMVIGFPTNCLSLWAAFVQ. 2 cysteine pairs are disulfide-bonded: C9/C258 and C90/C168. The Cytoplasmic segment spans residues 46–49; the sequence is VRQK. The helical transmembrane segment at 50-80 threads the bilayer; the sequence is NELGVYLLNLSISDLLYIATLPPWVNYFLHQ. At 81 to 85 the chain is on the extracellular side; the sequence is DNWIH. The helical transmembrane segment at 86–121 threads the bilayer; the sequence is GPESCKLFGFILYTNIYISIGFLSCISVDRYLAVAH. Residues 122-129 are Cytoplasmic-facing; it reads PLKFAKVR. A helical membrane pass occupies residues 130 to 156; it reads RVKTAAVVSAVVWAIEIGANSAPLFHN. At 157-172 the chain is on the extracellular side; that stretch reads ELFEDRFNHTFCFEKY. Residues 157–172 are extracellular loop 2 (ECL2); sequence ELFEDRFNHTFCFEKY. N-linked (GlcNAc...) asparagine glycosylation occurs at N164. A helical transmembrane segment spans residues 173–210; the sequence is PMEDWVAQMNLYRVFVGFLFPWVLMLFCYQGILRAVKT. Residues 211 to 214 are Cytoplasmic-facing; the sequence is NVST. The chain crosses the membrane as a helical span at residues 215–250; sequence EREEKAKIKRLALSLIAILLFCFAPYHLILLSRSVV. Residues 251–260 are Extracellular-facing; the sequence is YLGQPCDCTF. The chain crosses the membrane as a helical span at residues 261 to 289; it reads EENIFTAYHVSLALTSLNCVADPILYCLA. The Cytoplasmic portion of the chain corresponds to 290-364; the sequence is NEGARSEVTR…RVRRRRDCKC (75 aa).

It belongs to the G-protein coupled receptor 1 family.

The protein resides in the cell membrane. With respect to regulation, activated by a network of residues that connects an extracellular-facing cavity to Glu-145, a conserved charged residue buried in the transmembrane core of the receptor. Protonation likely drives conformational changes in extracellular loop 2 (ECL2), which stabilizes movement of transmembrane 3 (TM3) and a series of rearrangements that connect the extracellular-facing cavity to Glu-145, a residue only conserved in proton-sensing G-protein coupled receptors. Functionally, proton-sensing G-protein coupled receptor activated by extracellular pH, which is required to monitor pH changes and generate adaptive reactions. Ligand binding causes a conformation change that triggers signaling via guanine nucleotide-binding proteins (G proteins) and modulates the activity of downstream effectors, such as adenylate cyclase. In Callorhinchus milii (Ghost shark), this protein is G-protein coupled receptor 4.